The primary structure comprises 1458 residues: Secretory phospholipase A2 receptor (1458 aa).

A signal peptide spans Met1–Ala23. The Extracellular segment spans residues Ala24–Ser1393. Intrachain disulfides connect Cys49–Cys62, Cys87–Cys104, Cys176–Cys202, Cys190–Cys217, Cys258–Cys352, Cys328–Cys344, Cys404–Cys499, Cys476–Cys491, Cys615–Cys632, Cys697–Cys794, Cys772–Cys786, Cys838–Cys935, Cys912–Cys927, Cys1065–Cys1085, Cys1207–Cys1221, Cys1278–Cys1373, and Cys1350–Cys1365. Residues Cys49–Trp113 enclose the Ricin B-type lectin domain. N-linked (GlcNAc...) asparagine glycosylation is present at Asn91. The Fibronectin type-II domain maps to Ala171–Asp219. 8 consecutive C-type lectin domains span residues Cys227 to Leu356, Thr374 to Pro502, Ser511 to Val645, His660 to Arg798, Leu815 to Thr939, Gly954 to Gln1098, Leu1117 to His1231, and Glu1243 to Lys1376. 3 N-linked (GlcNAc...) asparagine glycosylation sites follow: Asn408, Asn431, and Asn452. The helical transmembrane segment at Ile1394–Ile1416 threads the bilayer. The Cytoplasmic segment spans residues Tyr1417–Asp1458. The Endocytosis signal signature appears at Asn1432–Thr1438.

Interacts with sPLA2-IB/PLA2G1B; this interaction mediates intracellular signaling as well as clearance of extracellular sPLA2-IB/PLA2G1B via endocytotic pathway. Interacts with sPLA2-X/PLA2G10; this interaction mediates sPLA2-X/PLA2G10 clearance and inactivation. Post-translationally, the secretory phospholipase A2 receptor form may be produced by the action of metalloproteinases. It contains all extracellular domains and only lacks transmembrane and cytosolic regions. It is however unclear whether this form is produced by proteolytic cleavage as suggested by some experiments, or by alternative splicing. In terms of tissue distribution, lung, skeletal muscle, brain, kidney and heart.

Its subcellular location is the cell membrane. The protein resides in the secreted. Functionally, receptor for secretory phospholipase A2 (sPLA2). Also able to bind to snake PA2-like toxins. Although its precise function remains unclear, binding of sPLA2 to its receptor participates in both positive and negative regulation of sPLA2 functions as well as clearance of sPLA2. Binding of sPLA2-IB/PLA2G1B induces various effects depending on the cell type, such as activation of the mitogen-activated protein kinase (MAPK) cascade to induce cell proliferation, the production of lipid mediators, selective release of arachidonic acid in bone marrow-derived mast cells. In neutrophils, binding of sPLA2-IB/PLA2G1B can activate p38 MAPK to stimulate elastase release and cell adhesion. May be involved in responses in pro-inflammatory cytokine productions during endotoxic shock. Also has endocytic properties and rapidly internalizes sPLA2 ligands, which is particularly important for the clearance of extracellular sPLA2s to protect their potent enzymatic activities. The soluble secretory phospholipase A2 receptor form is circulating and acts as a negative regulator of sPLA2 functions by blocking the biological functions of sPLA2-IB/PLA2G1B and sPLA2-X/PLA2G10. This chain is Secretory phospholipase A2 receptor (PLA2R1), found in Oryctolagus cuniculus (Rabbit).